A 947-amino-acid polypeptide reads, in one-letter code: DNA polymerase (947 aa).

This sequence belongs to the DNA polymerase type-B family.

The catalysed reaction is DNA(n) + a 2'-deoxyribonucleoside 5'-triphosphate = DNA(n+1) + diphosphate. The protein is DNA polymerase of Red sea bream iridovirus (RSIV).